A 187-amino-acid chain; its full sequence is Ribosome maturation factor RimM (187 aa).

The span at 1–17 (MTSTPSPSTADPNSTND) shows a compositional bias: polar residues. A disordered region spans residues 1-21 (MTSTPSPSTADPNSTNDWLPV). The PRC barrel domain maps to 111 to 184 (EGEFHLLDLV…WLLLTPPPGL (74 aa)).

This sequence belongs to the RimM family. Binds ribosomal protein uS19.

The protein localises to the cytoplasm. Its function is as follows. An accessory protein needed during the final step in the assembly of 30S ribosomal subunit, possibly for assembly of the head region. Essential for efficient processing of 16S rRNA. May be needed both before and after RbfA during the maturation of 16S rRNA. It has affinity for free ribosomal 30S subunits but not for 70S ribosomes. The protein is Ribosome maturation factor RimM of Synechococcus sp. (strain CC9311).